We begin with the raw amino-acid sequence, 313 residues long: Small ribosomal subunit protein uS2 (313 aa).

Residues R233–K256 are compositionally biased toward basic and acidic residues. The interval R233–A293 is disordered.

This sequence belongs to the universal ribosomal protein uS2 family.

The protein is Small ribosomal subunit protein uS2 of Bdellovibrio bacteriovorus (strain ATCC 15356 / DSM 50701 / NCIMB 9529 / HD100).